The sequence spans 348 residues: Holliday junction branch migration complex subunit RuvB (348 aa).

Over residues 1 to 10 the composition is skewed to polar residues; the sequence is MAIVSSNAGS. A disordered region spans residues 1-41; the sequence is MAIVSSNAGSSAPRREPVLDAQPLPEESSGRPDDGLRPKRL. Residues 13-197 are large ATPase domain (RuvB-L); it reads PRREPVLDAQ…FGLIQRLEFY (185 aa). The span at 28–41 shows a compositional bias: basic and acidic residues; that stretch reads SSGRPDDGLRPKRL. The ATP site is built by Leu-36, Arg-37, Gly-78, Lys-81, Thr-82, Thr-83, Arg-187, Tyr-197, and Arg-234. Thr-82 serves as a coordination point for Mg(2+). The tract at residues 198-269 is small ATPAse domain (RuvB-S); that stretch reads GQEDLEAIVS…LVSQALSLHR (72 aa). Positions 272–348 are head domain (RuvB-H); it reads HRGLDAGDRR…RAHLREQEVA (77 aa). DNA-binding residues include Arg-327 and Arg-332.

The protein belongs to the RuvB family. Homohexamer. Forms an RuvA(8)-RuvB(12)-Holliday junction (HJ) complex. HJ DNA is sandwiched between 2 RuvA tetramers; dsDNA enters through RuvA and exits via RuvB. An RuvB hexamer assembles on each DNA strand where it exits the tetramer. Each RuvB hexamer is contacted by two RuvA subunits (via domain III) on 2 adjacent RuvB subunits; this complex drives branch migration. In the full resolvosome a probable DNA-RuvA(4)-RuvB(12)-RuvC(2) complex forms which resolves the HJ.

The protein localises to the cytoplasm. The enzyme catalyses ATP + H2O = ADP + phosphate + H(+). Its function is as follows. The RuvA-RuvB-RuvC complex processes Holliday junction (HJ) DNA during genetic recombination and DNA repair, while the RuvA-RuvB complex plays an important role in the rescue of blocked DNA replication forks via replication fork reversal (RFR). RuvA specifically binds to HJ cruciform DNA, conferring on it an open structure. The RuvB hexamer acts as an ATP-dependent pump, pulling dsDNA into and through the RuvAB complex. RuvB forms 2 homohexamers on either side of HJ DNA bound by 1 or 2 RuvA tetramers; 4 subunits per hexamer contact DNA at a time. Coordinated motions by a converter formed by DNA-disengaged RuvB subunits stimulates ATP hydrolysis and nucleotide exchange. Immobilization of the converter enables RuvB to convert the ATP-contained energy into a lever motion, pulling 2 nucleotides of DNA out of the RuvA tetramer per ATP hydrolyzed, thus driving DNA branch migration. The RuvB motors rotate together with the DNA substrate, which together with the progressing nucleotide cycle form the mechanistic basis for DNA recombination by continuous HJ branch migration. Branch migration allows RuvC to scan DNA until it finds its consensus sequence, where it cleaves and resolves cruciform DNA. This Parasynechococcus marenigrum (strain WH8102) protein is Holliday junction branch migration complex subunit RuvB.